Consider the following 445-residue polypeptide: GTPase Der (445 aa).

EngA-type G domains are found at residues 3-167 and 180-353; these read PVIA…YAGQ and IKIA…AAAM. GTP-binding positions include 9 to 16, 56 to 60, 119 to 122, 186 to 193, 233 to 237, and 298 to 301; these read GRPNVGKS, DTGGF, NKAE, DTAGL, and NKWD. One can recognise a KH-like domain in the interval 354–438; the sequence is AKLPTPKLTR…PLRIEFRSSN (85 aa).

This sequence belongs to the TRAFAC class TrmE-Era-EngA-EngB-Septin-like GTPase superfamily. EngA (Der) GTPase family. As to quaternary structure, associates with the 50S ribosomal subunit.

Its function is as follows. GTPase that plays an essential role in the late steps of ribosome biogenesis. In Burkholderia vietnamiensis (strain G4 / LMG 22486) (Burkholderia cepacia (strain R1808)), this protein is GTPase Der.